The following is a 588-amino-acid chain: Probable catabolite repression protein creC (588 aa).

WD repeat units follow at residues 249–289 (VCNS…ALFT), 323–364 (LANQ…DIFR), 365–404 (SYYGGLICVCWSPDGKYIVTGGQDDLVTIWSFPERKIVAR), and 407–451 (GHNS…LHRP). A disordered region spans residues 452–499 (RAHQASTRQRTSMITSNSQHASRHRADSAGNRARSDSQRTADGYDEYD). The segment covering 455-471 (QASTRQRTSMITSNSQH) has biased composition (polar residues). The stretch at 523–560 (IGSDPICWLGFQEDSIMTSSLEGHIRTWDRPREGINDT) is one WD 5 repeat. The segment at 569–588 (AISAGAGSGSAVANSARGSL) is disordered.

It belongs to the WD repeat creC family. As to quaternary structure, interacts with creB.

Component of the regulatory network controlling carbon source utilization through ubiquitination and deubiquitination involving creA, creB, creC, creD and acrB. Required to prevent the proteolysis of the CreB deubiquitinating enzyme in the absence of carbon catabolite repression. CreB deubiquitinating enzyme stabilized in a complex with the CreC leads to the expression of genes such as those in the proline and quinate pathways. In Aspergillus terreus (strain NIH 2624 / FGSC A1156), this protein is Probable catabolite repression protein creC (creC).